The chain runs to 3184 residues: WD repeat- and FYVE domain-containing protein 4 (3184 aa).

Residues 1–18 show a composition bias toward basic and acidic residues; it reads MEAEDLSKAEDRNEDPGS. 4 disordered regions span residues 1 to 39, 944 to 993, 1837 to 1869, and 2309 to 2335; these read MEAE…QSSS, SHTH…QDST, VGAE…KAHP, and ALSS…NQDE. Residues 981 to 993 show a composition bias toward polar residues; it reads QAPQPLGESQDST. A compositionally biased stretch (basic and acidic residues) spans 2314–2324; it reads RHKESQDKNDH. Positions 2385–2510 constitute a BEACH-type PH domain; sequence LDKEKVTQKF…DRSKAFKSFC (126 aa). The region spanning 2527–2821 is the BEACH domain; sequence SLRRYPGSDR…QLFTKPHPAR (295 aa). 6 WD repeats span residues 2863 to 2922, 2923 to 2972, 2973 to 3014, 3015 to 3057, 3058 to 3141, and 3142 to 3184; these read MYLF…YGSD, KVLM…PRGL, RLRQ…LDHL, THVT…GQPL, ASIT…ELDV, and SIAL…SADG. The interval 3107-3128 is disordered; it reads SVPGRPAGEEPPAQPPSPRGHK.

In terms of assembly, interacts with HSP90AB1.

It is found in the early endosome. It localises to the endoplasmic reticulum. Functionally, plays a critical role in the regulation of cDC1-mediated cross-presentation of viral and tumor antigens in dendritic cells. Mechanistically, acts near the plasma membrane and interacts with endosomal membranes to promote endosomal-to-cytosol antigen trafficking. Also plays a role in B-cell survival through regulation of autophagy. This chain is WD repeat- and FYVE domain-containing protein 4 (WDFY4), found in Homo sapiens (Human).